We begin with the raw amino-acid sequence, 81 residues long: Photosystem I iron-sulfur center (81 aa).

4Fe-4S ferredoxin-type domains lie at 2 to 31 (SHSV…MIPW) and 39 to 68 (IAPA…VRVY). 8 residues coordinate [4Fe-4S] cluster: cysteine 11, cysteine 14, cysteine 17, cysteine 21, cysteine 48, cysteine 51, cysteine 54, and cysteine 58.

As to quaternary structure, the eukaryotic PSI reaction center is composed of at least 11 subunits. [4Fe-4S] cluster serves as cofactor.

The protein resides in the plastid. It is found in the chloroplast thylakoid membrane. It carries out the reaction reduced [plastocyanin] + hnu + oxidized [2Fe-2S]-[ferredoxin] = oxidized [plastocyanin] + reduced [2Fe-2S]-[ferredoxin]. In terms of biological role, apoprotein for the two 4Fe-4S centers FA and FB of photosystem I (PSI); essential for photochemical activity. FB is the terminal electron acceptor of PSI, donating electrons to ferredoxin. The C-terminus interacts with PsaA/B/D and helps assemble the protein into the PSI complex. Required for binding of PsaD and PsaE to PSI. PSI is a plastocyanin-ferredoxin oxidoreductase, converting photonic excitation into a charge separation, which transfers an electron from the donor P700 chlorophyll pair to the spectroscopically characterized acceptors A0, A1, FX, FA and FB in turn. The polypeptide is Photosystem I iron-sulfur center (Liriodendron tulipifera (Tuliptree)).